Here is a 523-residue protein sequence, read N- to C-terminus: Alpha,alpha-trehalose-phosphate synthase [UDP-forming] (523 aa).

The D-glucose 6-phosphate site is built by Y98 and D152. Residues R288 and K293 each coordinate UDP. Residues R288 and K293 each contribute to the UDP-alpha-D-glucose site. R326 provides a ligand contact to D-glucose 6-phosphate. Position 387-395 (D387–E395) interacts with UDP-alpha-D-glucose. L391 to E395 lines the UDP pocket. The segment at Q503–D523 is disordered. Basic and acidic residues predominate over residues E509–D523.

Belongs to the glycosyltransferase 20 family.

The enzyme catalyses D-glucose 6-phosphate + UDP-alpha-D-glucose = alpha,alpha-trehalose 6-phosphate + UDP + H(+). Its pathway is carbohydrate biosynthesis. In terms of biological role, synthase catalytic subunit of the trehalose synthase complex that catalyzes the production of trehalose from glucose-6-phosphate and UDP-alpha-D-glucose in a two step process. The disaccharide trehalose serves as a storage carbohydrate that is mobilized during conidial germination. Trehalose also serves as a protectant for cell integrity during stress. In Botryotinia fuckeliana (strain B05.10) (Noble rot fungus), this protein is Alpha,alpha-trehalose-phosphate synthase [UDP-forming].